Here is a 307-residue protein sequence, read N- to C-terminus: D-alanine--D-alanine ligase (307 aa).

The region spanning 101 to 301 is the ATP-grasp domain; sequence KTVMRAAGVS…FGELVRWMVE (201 aa). 127–182 lines the ATP pocket; it reads PLTPPYVVKPIAEGSSMGVIIVRDERSHPPQILASDEWVYGEEVLAETYVAGRELT. Asp-251, Glu-268, and Asn-270 together coordinate Mg(2+).

The protein belongs to the D-alanine--D-alanine ligase family. Requires Mg(2+) as cofactor. Mn(2+) is required as a cofactor.

It localises to the cytoplasm. The enzyme catalyses 2 D-alanine + ATP = D-alanyl-D-alanine + ADP + phosphate + H(+). It functions in the pathway cell wall biogenesis; peptidoglycan biosynthesis. In terms of biological role, cell wall formation. This is D-alanine--D-alanine ligase from Methylorubrum extorquens (strain CM4 / NCIMB 13688) (Methylobacterium extorquens).